The primary structure comprises 545 residues: CTP synthase (545 aa).

An amidoligase domain region spans residues 1-266 (MTTKYIFVTG…DEICVKRFGL (266 aa)). CTP is bound at residue S14. S14 contacts UTP. ATP-binding positions include 15–20 (SLGKGI) and D72. 2 residues coordinate Mg(2+): D72 and E140. Residues 147–149 (DIE), 187–192 (KTKPTQ), and K223 each bind CTP. Residues 187–192 (KTKPTQ) and K223 each bind UTP. 239–241 (RDV) lines the ATP pocket. The 252-residue stretch at 291 to 542 (IIGMVGKYTE…IKSAIDHQQG (252 aa)) folds into the Glutamine amidotransferase type-1 domain. An L-glutamine-binding site is contributed by G352. C379 (nucleophile; for glutamine hydrolysis) is an active-site residue. Residues 380–383 (LGMQ), E403, and R470 each bind L-glutamine. Active-site residues include H515 and E517.

Belongs to the CTP synthase family. Homotetramer.

It catalyses the reaction UTP + L-glutamine + ATP + H2O = CTP + L-glutamate + ADP + phosphate + 2 H(+). It carries out the reaction L-glutamine + H2O = L-glutamate + NH4(+). The catalysed reaction is UTP + NH4(+) + ATP = CTP + ADP + phosphate + 2 H(+). Its pathway is pyrimidine metabolism; CTP biosynthesis via de novo pathway; CTP from UDP: step 2/2. Allosterically activated by GTP, when glutamine is the substrate; GTP has no effect on the reaction when ammonia is the substrate. The allosteric effector GTP functions by stabilizing the protein conformation that binds the tetrahedral intermediate(s) formed during glutamine hydrolysis. Inhibited by the product CTP, via allosteric rather than competitive inhibition. Functionally, catalyzes the ATP-dependent amination of UTP to CTP with either L-glutamine or ammonia as the source of nitrogen. Regulates intracellular CTP levels through interactions with the four ribonucleotide triphosphates. In Psychromonas ingrahamii (strain DSM 17664 / CCUG 51855 / 37), this protein is CTP synthase.